The sequence spans 143 residues: Ribosome-binding factor A (143 aa).

The interval Lys119–Asp143 is disordered. The segment covering Gln122–Ser133 has biased composition (polar residues).

The protein belongs to the RbfA family. Monomer. Binds 30S ribosomal subunits, but not 50S ribosomal subunits or 70S ribosomes.

It localises to the cytoplasm. Functionally, one of several proteins that assist in the late maturation steps of the functional core of the 30S ribosomal subunit. Associates with free 30S ribosomal subunits (but not with 30S subunits that are part of 70S ribosomes or polysomes). Required for efficient processing of 16S rRNA. May interact with the 5'-terminal helix region of 16S rRNA. In Shewanella frigidimarina (strain NCIMB 400), this protein is Ribosome-binding factor A.